The primary structure comprises 257 residues: ATP synthase subunit a (257 aa).

A propeptide spans 1–8 (MRHLDFVL) (removed in mature form). The next 7 helical transmembrane spans lie at 34-54 (LTNIGLYLTISIFLILTYSLL), 93-113 (FFPLMYVLFIFILVNNLIGLV), 122-142 (HFILTFSISFTVVLGATILGF), 149-169 (FFSLFVPSGCPLALLPLLVLI), 187-207 (ANILSGHMLLSILSGFTYNIM), 210-230 (GIIFFILGLIPLAFIIAFSGL), and 231-251 (ELAIAFIQAQVFVVLACSYIK).

It belongs to the ATPase A chain family. F-type ATPases have 2 components, CF(1) - the catalytic core - and CF(0) - the membrane proton channel. CF(1) has five subunits: alpha(3), beta(3), gamma(1), delta(1), epsilon(1). CF(0) has three main subunits: a, b and c.

It is found in the mitochondrion inner membrane. Functionally, mitochondrial membrane ATP synthase (F(1)F(0) ATP synthase or Complex V) produces ATP from ADP in the presence of a proton gradient across the membrane which is generated by electron transport complexes of the respiratory chain. F-type ATPases consist of two structural domains, F(1) - containing the extramembraneous catalytic core and F(0) - containing the membrane proton channel, linked together by a central stalk and a peripheral stalk. During catalysis, ATP synthesis in the catalytic domain of F(1) is coupled via a rotary mechanism of the central stalk subunits to proton translocation. Key component of the proton channel; it may play a direct role in the translocation of protons across the membrane. The protein is ATP synthase subunit a (atp6) of Penicillium chrysogenum (Penicillium notatum).